The following is a 91-amino-acid chain: Elongation factor 1-beta (91 aa).

It belongs to the EF-1-beta/EF-1-delta family.

Functionally, promotes the exchange of GDP for GTP in EF-1-alpha/GDP, thus allowing the regeneration of EF-1-alpha/GTP that could then be used to form the ternary complex EF-1-alpha/GTP/AAtRNA. The protein is Elongation factor 1-beta (ef1b) of Pyrococcus horikoshii (strain ATCC 700860 / DSM 12428 / JCM 9974 / NBRC 100139 / OT-3).